The sequence spans 136 residues: Large ribosomal subunit protein uL3 (136 aa).

Glutamine 83 bears the N5-methylglutamine mark.

The protein belongs to the universal ribosomal protein uL3 family. As to quaternary structure, part of the 50S ribosomal subunit. Forms a cluster with proteins L14 and L19. Post-translationally, methylated by PrmB.

In terms of biological role, one of the primary rRNA binding proteins, it binds directly near the 3'-end of the 23S rRNA, where it nucleates assembly of the 50S subunit. The protein is Large ribosomal subunit protein uL3 (rplC) of Carsonella ruddii.